Here is a 366-residue protein sequence, read N- to C-terminus: Chorismate synthase (366 aa).

NADP(+)-binding residues include Arg-48 and Arg-54. FMN is bound by residues 125-127, 238-239, Gly-278, 293-297, and Arg-319; these read RSS, NA, and KPTSS.

It belongs to the chorismate synthase family. Homotetramer. It depends on FMNH2 as a cofactor.

It carries out the reaction 5-O-(1-carboxyvinyl)-3-phosphoshikimate = chorismate + phosphate. It participates in metabolic intermediate biosynthesis; chorismate biosynthesis; chorismate from D-erythrose 4-phosphate and phosphoenolpyruvate: step 7/7. Catalyzes the anti-1,4-elimination of the C-3 phosphate and the C-6 proR hydrogen from 5-enolpyruvylshikimate-3-phosphate (EPSP) to yield chorismate, which is the branch point compound that serves as the starting substrate for the three terminal pathways of aromatic amino acid biosynthesis. This reaction introduces a second double bond into the aromatic ring system. The protein is Chorismate synthase of Laribacter hongkongensis (strain HLHK9).